An 84-amino-acid chain; its full sequence is U21-theraphotoxin-Cg1b (84 aa).

The N-terminal stretch at 1 to 21 (MKVSVLITLAVLGVMFLLTSA) is a signal peptide. A propeptide spanning residues 22–47 (EERGSDQMDSPAWLKSMERIFQSEER) is cleaved from the precursor. 3 disulfide bridges follow: Cys-49–Cys-63, Cys-56–Cys-68, and Cys-62–Cys-76. Phe-82 carries the post-translational modification Phenylalanine amide.

The protein belongs to the neurotoxin 10 (Hwtx-1) family. 05 (F4a) subfamily. As to expression, expressed by the venom gland.

It is found in the secreted. In terms of biological role, probable ion channel inhibitor. This is U21-theraphotoxin-Cg1b from Chilobrachys guangxiensis (Chinese earth tiger tarantula).